Here is a 303-residue protein sequence, read N- to C-terminus: Proteasome subunit beta (303 aa).

Residues 1-67 (MTWQFPDRLS…SGGTGQLPHG (67 aa)) constitute a propeptide, removed in mature form; by autocatalysis. The active-site Nucleophile is Thr-68.

It belongs to the peptidase T1B family. The 20S proteasome core is composed of 14 alpha and 14 beta subunits that assemble into four stacked heptameric rings, resulting in a barrel-shaped structure. The two inner rings, each composed of seven catalytic beta subunits, are sandwiched by two outer rings, each composed of seven alpha subunits. The catalytic chamber with the active sites is on the inside of the barrel. Has a gated structure, the ends of the cylinder being occluded by the N-termini of the alpha-subunits. Is capped by the proteasome-associated ATPase, ARC.

It is found in the cytoplasm. The enzyme catalyses Cleavage of peptide bonds with very broad specificity.. It functions in the pathway protein degradation; proteasomal Pup-dependent pathway. With respect to regulation, the formation of the proteasomal ATPase ARC-20S proteasome complex, likely via the docking of the C-termini of ARC into the intersubunit pockets in the alpha-rings, may trigger opening of the gate for substrate entry. Interconversion between the open-gate and close-gate conformations leads to a dynamic regulation of the 20S proteasome proteolysis activity. Functionally, component of the proteasome core, a large protease complex with broad specificity involved in protein degradation. This chain is Proteasome subunit beta, found in Mycolicibacterium paratuberculosis (strain ATCC BAA-968 / K-10) (Mycobacterium paratuberculosis).